The sequence spans 245 residues: Ribonuclease PH (245 aa).

Phosphate contacts are provided by residues Arg-86 and 124 to 126; that span reads GTR.

Belongs to the RNase PH family. In terms of assembly, homohexameric ring arranged as a trimer of dimers.

It carries out the reaction tRNA(n+1) + phosphate = tRNA(n) + a ribonucleoside 5'-diphosphate. Functionally, phosphorolytic 3'-5' exoribonuclease that plays an important role in tRNA 3'-end maturation. Removes nucleotide residues following the 3'-CCA terminus of tRNAs; can also add nucleotides to the ends of RNA molecules by using nucleoside diphosphates as substrates, but this may not be physiologically important. Probably plays a role in initiation of 16S rRNA degradation (leading to ribosome degradation) during starvation. In Bacillus anthracis (strain A0248), this protein is Ribonuclease PH.